Here is a 289-residue protein sequence, read N- to C-terminus: ATP synthase gamma chain (289 aa).

Belongs to the ATPase gamma chain family. In terms of assembly, F-type ATPases have 2 components, CF(1) - the catalytic core - and CF(0) - the membrane proton channel. CF(1) has five subunits: alpha(3), beta(3), gamma(1), delta(1), epsilon(1). CF(0) has three main subunits: a, b and c.

Its subcellular location is the cell membrane. Produces ATP from ADP in the presence of a proton gradient across the membrane. The gamma chain is believed to be important in regulating ATPase activity and the flow of protons through the CF(0) complex. This Lactococcus lactis subsp. lactis (strain IL1403) (Streptococcus lactis) protein is ATP synthase gamma chain.